The primary structure comprises 307 residues: Phospho-N-acetylmuramoyl-pentapeptide-transferase (307 aa).

Helical transmembrane passes span 3–23, 47–67, 71–91, 105–125, 137–157, 162–182, 186–206, 210–230, 237–257, and 285–305; these read IILF…KYWI, SGTP…FLFF, FFPS…DFKL, IFLS…DYKI, IFYV…INLT, GLAG…NFQF, LTLE…FNSH, IFMG…LSII, LVFL…QVFF, and VVWR…ILWN.

The protein belongs to the glycosyltransferase 4 family. MraY subfamily. Mg(2+) serves as cofactor.

The protein localises to the cell inner membrane. It catalyses the reaction UDP-N-acetyl-alpha-D-muramoyl-L-alanyl-gamma-D-glutamyl-meso-2,6-diaminopimeloyl-D-alanyl-D-alanine + di-trans,octa-cis-undecaprenyl phosphate = di-trans,octa-cis-undecaprenyl diphospho-N-acetyl-alpha-D-muramoyl-L-alanyl-D-glutamyl-meso-2,6-diaminopimeloyl-D-alanyl-D-alanine + UMP. It participates in cell wall biogenesis; peptidoglycan biosynthesis. Its function is as follows. Catalyzes the initial step of the lipid cycle reactions in the biosynthesis of the cell wall peptidoglycan: transfers peptidoglycan precursor phospho-MurNAc-pentapeptide from UDP-MurNAc-pentapeptide onto the lipid carrier undecaprenyl phosphate, yielding undecaprenyl-pyrophosphoryl-MurNAc-pentapeptide, known as lipid I. The polypeptide is Phospho-N-acetylmuramoyl-pentapeptide-transferase (Dictyoglomus turgidum (strain DSM 6724 / Z-1310)).